The sequence spans 518 residues: 2-isopropylmalate synthase (518 aa).

Residues Val-5–Tyr-267 form the Pyruvate carboxyltransferase domain. Residues Asp-14, His-202, His-204, and Asn-238 each contribute to the Mn(2+) site. The regulatory domain stretch occupies residues Ser-392 to Asn-518.

This sequence belongs to the alpha-IPM synthase/homocitrate synthase family. LeuA type 1 subfamily. Homodimer. Mn(2+) serves as cofactor.

It is found in the cytoplasm. It catalyses the reaction 3-methyl-2-oxobutanoate + acetyl-CoA + H2O = (2S)-2-isopropylmalate + CoA + H(+). It participates in amino-acid biosynthesis; L-leucine biosynthesis; L-leucine from 3-methyl-2-oxobutanoate: step 1/4. Its function is as follows. Catalyzes the condensation of the acetyl group of acetyl-CoA with 3-methyl-2-oxobutanoate (2-ketoisovalerate) to form 3-carboxy-3-hydroxy-4-methylpentanoate (2-isopropylmalate). This is 2-isopropylmalate synthase from Buchnera aphidicola subsp. Rhopalosiphum padi.